The following is a 1150-amino-acid chain: MRKKQKLPFDKLAIALMSTSILLNAQSDIKANTVTEDTPAAEQAVETPQPTAVSEEVPSSKETKTPQTPDNAEETVADKANDLALQAPAKTADTPATSKATIRDLNDPSQVKTLQEKAGKGAGTVVAVIDAGFDKNHEAWRLTDKTKARYQSKEDLEKAKKEHGITYGEWVNDKVAYYHDYSKDGKTAVDQEHGTHVSGILSGNAPSETKEPYRLEGAMPEAQLLLMRVEIVNGLADYARNYAQAIRDAVNLGAKVINMSFGNAALAYANLPDETKKAFDYAKSKGVSIVTSAGNDSSFGGKTRLPLADHPDYGVVGTPAAADSTLTVASYSPDKQLTETATVKTADQQDKEMPVLSTNRFEPNKAYDYAYANRGMKEDDFKDVKGKIALIERGDIDFKDKIANAKKAGAVGVLIYDNQDKGFPIELPNVDQMPAAFISRKDGLLLKENPQKTITFNATPKVLPTASGTKLSRFSSWGLTADGNIKPDIAAPGQDILSSVANNKYAKLSGTSMSAPLVAGIMGLLQKQYEIQYPDMTPSERLDLAKKVLMSSATALYDEDEKAYFSPRQQGAGAVDAKKASAATMYVTDKDNTSSKVHLNNVSDKFEVTVTVHNKSDKPQELYYQATVQTDKVDGKHFALAPKALYETSWQKITIPANSSKQVTVPIDASRFSKDLLAQMKNGYFLEGFVRFKQDPKKEELMSIPYIGFRGDFGNLSALEKPIYDSKDGSSYYHEANSDAKDQLDGDGLQFYALKNNFTALTTESNPWTIIKAVKEGVENIEDIESSEITETIFAGTFAKQDDDSHYYIHRHANGKPYAAISPNGDGNRDYVQFQGTFLRNAKNLVAEVLDKEGNVVWTSEVTEQVVKNYNNDLASTLGSTRFEKTRWDGKDKDGKVVANGTYTYRVRYTPISSGAKEQHTDFDVIVDNTTLEVATSATFSTEDRRLTLASKPKTSQPIYRERIAYTYMDEDLPTTEYISPNEDGTFTLPEEAETMEGATVPLKMSDFTYVVEDMAGNITYTPVTKLLEGHSNKPEQDGSDQAPDKKPEAKPEQDGSGQTPDKKPETKPEKDSSGQTPGKTPQKGQPSRTLEKRSSKRALATKASARDQLPTTNDKDTNRLHLLKLVMTTFFFGLVAHIFKTKRQKETKK.

A signal peptide spans 1 to 31 (MRKKQKLPFDKLAIALMSTSILLNAQSDIKA). A disordered region spans residues 33–73 (TVTEDTPAAEQAVETPQPTAVSEEVPSSKETKTPQTPDNAE). The Peptidase S8 domain maps to 99 to 581 (KATIRDLNDP…AGAVDAKKAS (483 aa)). Active-site charge relay system residues include Asp130, His193, and Ser512. Basic and acidic residues-rich tracts occupy residues 1029–1054 (EGHS…KPEQ) and 1061–1073 (PDKK…EKDS). The segment at 1029–1116 (EGHSNKPEQD…RDQLPTTNDK (88 aa)) is disordered. Repeat copies occupy residues 1034 to 1050 (KPEQ…KPEA), 1051 to 1067 (KPEQ…KPET), and 1068 to 1084 (KPEK…TPQK). The tract at residues 1034–1084 (KPEQDGSDQAPDKKPEAKPEQDGSGQTPDKKPETKPEKDSSGQTPGKTPQK) is 3 X 17 AA tandem repeats. Residues 1075–1089 (GQTPGKTPQKGQPSR) are compositionally biased toward polar residues. The LPXTG sorting signal motif lies at 1110-1114 (LPTTN). Thr1113 carries the pentaglycyl murein peptidoglycan amidated threonine modification. Positions 1114-1150 (NDKDTNRLHLLKLVMTTFFFGLVAHIFKTKRQKETKK) are cleaved as a propeptide — removed by sortase.

The protein belongs to the peptidase S8 family. Post-translationally, cleaved by SpeB protease; leading to its degradation. Degradation by SpeB is probably strictly regulated to preserve integrity of C5a peptidase.

The protein resides in the secreted. Its subcellular location is the cell wall. It catalyses the reaction The primary cleavage site is at 67-His-|-Lys-68 in human C5a with a minor secondary cleavage site at 58-Ala-|-Ser-59.. This virulence factor of S.pyogenes specifically cleaves the human serum chemotaxin C5a at '68-Lys-|-Asp-69' bond near its C-terminus, destroying its ability to serve as a chemoattractant. This Streptococcus pyogenes serotype M18 (strain MGAS8232) protein is C5a peptidase (scpA).